Consider the following 99-residue polypeptide: Large ribosomal subunit protein uL23 (99 aa).

This sequence belongs to the universal ribosomal protein uL23 family. Part of the 50S ribosomal subunit. Contacts protein L29, and trigger factor when it is bound to the ribosome.

Functionally, one of the early assembly proteins it binds 23S rRNA. One of the proteins that surrounds the polypeptide exit tunnel on the outside of the ribosome. Forms the main docking site for trigger factor binding to the ribosome. The sequence is that of Large ribosomal subunit protein uL23 from Streptococcus suis (strain 98HAH33).